A 457-amino-acid chain; its full sequence is MAGYLSESDFVMVEEGFSTRDLLEELTLGASQATTGKVAAFFVADAVVRKHFCFLKYLPRVRPFYAVRCNSSLGVLKVLAELGLGFSCASKAEMELVQHIGVPASKIICANPCKQVAQIKYAAKHGVRLLSFDNEVELAKVVKSHPSAKSWGEVLTLDALGLHHTHRRVGCSLMFQASVIASVAQGYLELVCQPFHIGSGCPDPQAYAQSIADARLVFQMGAELGHTMNILDLGGGFPGLEGAKVRFEEVTSVIGKNIPFYTPPPCHVPLRTHATKKMTSSDFCCRVHVTAKEKPLFSPFLTEQTGAAPKSIVYHLDEGVYGVFNSVLFDNTCPTPALQKKPSADQPLYSSSLWGPAVDGCDCVAEGLWLPQLQVGDWLVFDNMGAYTVDTKSLLGGTQACRVTYAMSRLAWEALQGQLLPAEEDQDAEGVCKPLSCGWEITDSLCVGPVFTPASIM.

The tract at residues 115–138 (QVAQIKYAAKHGVRLLSFDNEVEL) is necessary for polyamine uptake stimulation.

This sequence belongs to the Orn/Lys/Arg decarboxylase class-II family. ODC antizyme inhibitor subfamily. Monomer. Interacts with OAZ1, OAZ2 and OAZ3; this interaction disrupts the interaction between the antizyme and ODC1. Does not form a heterodimer with ODC1. In terms of processing, ubiquitinated, leading to its proteasomal degradation; a process that is reduced in presence of antizymes. May also be degraded through the lysosomal degradative pathway in a proteasomal-independent manner.

The protein localises to the nucleus. It is found in the cytoplasm. It localises to the perinuclear region. Its subcellular location is the membrane. The protein resides in the cytoplasmic vesicle. The protein localises to the endoplasmic reticulum-Golgi intermediate compartment. It is found in the golgi apparatus. It localises to the cis-Golgi network. Its subcellular location is the trans-Golgi network. The protein resides in the cytoplasmic granule. The protein localises to the cell projection. It is found in the axon. It localises to the dendrite. Its subcellular location is the perikaryon. Antizyme inhibitor (AZI) protein that positively regulates ornithine decarboxylase (ODC) activity and polyamine uptake. AZI is an enzymatically inactive ODC homolog that counteracts the negative effect of ODC antizymes (AZs) OAZ1, OAZ2 and OAZ3 on ODC activity by competing with ODC for antizyme-binding. Inhibits antizyme-dependent ODC degradation and releases ODC monomers from their inactive complex with antizymes, leading to formation of the catalytically active ODC homodimer and restoring polyamine production. Participates in the morphological integrity of the trans-Golgi network (TGN) and functions as a regulator of intracellular secretory vesicle trafficking. The sequence is that of Antizyme inhibitor 2 (Azin2) from Rattus norvegicus (Rat).